We begin with the raw amino-acid sequence, 471 residues long: MPTNIYVTEEELKKQEKIMKEIAEENKGKNLYYHIETYGCQMNVHDSEKLAGMLEKMGYKYTENLEQADVLLFNTCAVREHAEIRVLGRVSQMKELKARNPNLIIGVSGCMMQEKNVVEAIKEKYSYIDIVFGTHNIYKFPQLLWEALNSQDIVIDIIEDTKNVIEELPVKRDSNLKAWVNIIYGCNNFCTYCIVPYTRGREKSRKPEDIIAEVKELAQKGYKEITLLGQNVNSYGKDLDEDITFAKLLYKLNDIEGIERIRFMTSHPKDISDELIYAIRDLDKVCEHLHLPVQAGSNKILKKMNRKYTKEHYLEIIDKVRSNIPDIAITTDIIVGFPGETEEDFLETLDLVERVRFDAAYTFIYSKRAGTVAANMPDQVDDAVKHERLERLIELQNKISLEKSAELRGKIVEVLIEGISKRDSNKLTSRTRTNKVVHFVGDESLIGKLANVKITETKAWTMQGELVEVIR.

Positions leucine 31–asparagine 149 constitute an MTTase N-terminal domain. Positions 40, 76, 110, 186, 190, and 193 each coordinate [4Fe-4S] cluster. One can recognise a Radical SAM core domain in the interval arginine 172–glutamate 402. One can recognise a TRAM domain in the interval alanine 405–glutamate 468.

This sequence belongs to the methylthiotransferase family. MiaB subfamily. Monomer. The cofactor is [4Fe-4S] cluster.

The protein localises to the cytoplasm. It catalyses the reaction N(6)-dimethylallyladenosine(37) in tRNA + (sulfur carrier)-SH + AH2 + 2 S-adenosyl-L-methionine = 2-methylsulfanyl-N(6)-dimethylallyladenosine(37) in tRNA + (sulfur carrier)-H + 5'-deoxyadenosine + L-methionine + A + S-adenosyl-L-homocysteine + 2 H(+). Its function is as follows. Catalyzes the methylthiolation of N6-(dimethylallyl)adenosine (i(6)A), leading to the formation of 2-methylthio-N6-(dimethylallyl)adenosine (ms(2)i(6)A) at position 37 in tRNAs that read codons beginning with uridine. In Thermoanaerobacter pseudethanolicus (strain ATCC 33223 / 39E) (Clostridium thermohydrosulfuricum), this protein is tRNA-2-methylthio-N(6)-dimethylallyladenosine synthase.